A 108-amino-acid chain; its full sequence is Cytochrome c oxidase subunit 1 (108 aa).

The chain crosses the membrane as a helical span at residues 10-30 (AFVAPVLGLLGFIPGGAGGIV). His-49 contacts heme a3. 2 helical membrane passes run 50–70 (FHLQVASLVTLTAMGSLYWLL) and 85–105 (LGLAVVWLWFLGMMIMAVGLH). His-51 contacts Fe(II)-heme a.

It belongs to the heme-copper respiratory oxidase family. Heme serves as cofactor. Cu cation is required as a cofactor.

The protein localises to the cell membrane. It catalyses the reaction 4 Fe(II)-[cytochrome c] + O2 + 8 H(+)(in) = 4 Fe(III)-[cytochrome c] + 2 H2O + 4 H(+)(out). The protein operates within energy metabolism; oxidative phosphorylation. In Thermus thermophilus, this protein is Cytochrome c oxidase subunit 1 (cbaA).